Consider the following 611-residue polypeptide: Alpha-1,2-mannosyltransferase ALG9 (611 aa).

The span at 1–10 shows a compositional bias: basic residues; sequence MASRRARQRL. The interval 1-51 is disordered; that stretch reads MASRRARQRLKGGGGGGGGGGDAGPAAEKLEQLGSREAGAEPRPESGNKAG. At 1–135 the chain is on the lumenal side; that stretch reads MASRRARQRL…FHARILQTNK (135 aa). The span at 11–23 shows a compositional bias: gly residues; the sequence is KGGGGGGGGGGDA. Asn-77 carries N-linked (GlcNAc...) asparagine glycosylation. A helical membrane pass occupies residues 136 to 156; that stretch reads ILVFYFLRCLLAFVSCVCELY. The Cytoplasmic segment spans residues 157–171; sequence FYKAVCKKFGLHVSR. The chain crosses the membrane as a helical span at residues 172–192; sequence MMLAFLVLSTGMFCSSSAFLP. The Lumenal portion of the chain corresponds to 193 to 213; sequence SSFCMYTTLIAMTGWYMDKTP. Residues 214–234 traverse the membrane as a helical segment; sequence IAVLGVAAGAILGWPFSAALG. The Cytoplasmic portion of the chain corresponds to 235–249; it reads LPIAFDLLARKHRWK. Residues 250–270 traverse the membrane as a helical segment; sequence SFLLWSLVALALFLVPVVVID. Topologically, residues 271-310 are lumenal; that stretch reads SYYYGKLVVAPLNIVLYNVFTSHGPDLYGTEPWYFYLING. Residues 311-331 traverse the membrane as a helical segment; it reads FLNFNVAFALALLVLPLTFLM. Residues 332–342 are Cytoplasmic-facing; that stretch reads EYLLQRFHVQN. Residues 343–363 traverse the membrane as a helical segment; sequence LGHPYWLTLAPMYIWFIIFFI. The Lumenal portion of the chain corresponds to 364 to 370; the sequence is QPHKEER. The chain crosses the membrane as a helical span at residues 371 to 391; sequence FLFPVYPLICLCGAVALSALQ. Residues 392 to 405 lie on the Cytoplasmic side of the membrane; sequence KCYHFVFQRYRLEH. Residues 406–426 form a helical membrane-spanning segment; that stretch reads YTVTSNWLALGTVFLFGLLSF. Topologically, residues 427-611 are lumenal; that stretch reads SRSVALFRGY…AKPSRKKSGG (185 aa). 2 N-linked (GlcNAc...) asparagine glycosylation sites follow: Asn-550 and Asn-593.

Belongs to the glycosyltransferase 22 family.

It is found in the endoplasmic reticulum membrane. It catalyses the reaction an alpha-D-Man-(1-&gt;2)-alpha-D-Man-(1-&gt;2)-alpha-D-Man-(1-&gt;3)-[alpha-D-Man-(1-&gt;3)-alpha-D-Man-(1-&gt;6)]-beta-D-Man-(1-&gt;4)-beta-D-GlcNAc-(1-&gt;4)-alpha-D-GlcNAc-diphospho-di-trans,poly-cis-dolichol + a di-trans,poly-cis-dolichyl beta-D-mannosyl phosphate = an alpha-D-Man-(1-&gt;2)-alpha-D-Man-(1-&gt;2)-alpha-D-Man-(1-&gt;3)-[alpha-D-Man-(1-&gt;2)-alpha-D-Man-(1-&gt;3)-alpha-D-Man-(1-&gt;6)]-beta-D-Man-(1-&gt;4)-beta-D-GlcNAc-(1-&gt;4)-alpha-D-GlcNAc-diphospho-di-trans,poly-cis-dolichol + a di-trans,poly-cis-dolichyl phosphate + H(+). The catalysed reaction is an alpha-D-Man-(1-&gt;2)-alpha-D-Man-(1-&gt;2)-alpha-D-Man-(1-&gt;3)-[alpha-D-Man-(1-&gt;2)-alpha-D-Man-(1-&gt;3)-[alpha-D-Man-(1-&gt;6)]-alpha-D-Man-(1-&gt;6)]-beta-D-Man-(1-&gt;4)-beta-D-GlcNAc-(1-&gt;4)-alpha-D-GlcNAc-diphospho-di-trans,poly-cis-dolichol + a di-trans,poly-cis-dolichyl beta-D-mannosyl phosphate = an alpha-D-Man-(1-&gt;2)-alpha-D-Man-(1-&gt;2)-alpha-D-Man-(1-&gt;3)-[alpha-D-Man-(1-&gt;2)-alpha-D-Man-(1-&gt;3)-[alpha-D-Man-(1-&gt;2)-alpha-D-Man-(1-&gt;6)]-alpha-D-Man-(1-&gt;6)]-beta-D-Man-(1-&gt;4)-beta-D-GlcNAc-(1-&gt;4)-alpha-D-GlcNAc-diphospho-di-trans,poly-cis-dolichol + a di-trans,poly-cis-dolichyl phosphate + H(+). It participates in protein modification; protein glycosylation. Mannosyltransferase that operates in the biosynthetic pathway of dolichol-linked oligosaccharides, the glycan precursors employed in protein asparagine (N)-glycosylation. The assembly of dolichol-linked oligosaccharides begins on the cytosolic side of the endoplasmic reticulum membrane and finishes in its lumen. The sequential addition of sugars to dolichol pyrophosphate produces dolichol-linked oligosaccharides containing fourteen sugars, including two GlcNAcs, nine mannoses and three glucoses. Once assembled, the oligosaccharide is transferred from the lipid to nascent proteins by oligosaccharyltransferases. In the lumen of the endoplasmic reticulum, catalyzes the addition of the seventh and ninth alpha-1,2-linked mannose residues to Man(6)GlcNAc(2)-PP-dolichol and Man(8)GlcNAc(2)-PP-dolichol respectively. The protein is Alpha-1,2-mannosyltransferase ALG9 of Mus musculus (Mouse).